A 622-amino-acid chain; its full sequence is Mitochondrial Rho GTPase 2 (622 aa).

At 1-596 (MRRDVRILLL…ELHPTPFWLR (596 aa)) the chain is on the cytoplasmic side. The Miro 1 domain occupies 2-168 (RRDVRILLLG…FYYAQKAVLH (167 aa)). The GTP site is built by G16, K17, T18, and S19. T18 contributes to the Mg(2+) binding site. D57 contacts Mg(2+). S59 lines the GTP pocket. A Glycyl lysine isopeptide (Lys-Gly) (interchain with G-Cter in ubiquitin) cross-link involves residue K96. GTP is bound by residues N118, K119, D121, A149, and K150. K119 is covalently cross-linked (Glycyl lysine isopeptide (Lys-Gly) (interchain with G-Cter in ubiquitin)). K164 is covalently cross-linked (Glycyl lysine isopeptide (Lys-Gly) (interchain with G-Cter in ubiquitin)). 2 consecutive EF-hand domains span residues 184-219 (ACAQ…CFGH) and 304-339 (RGYQ…FSVA). Ca(2+) contacts are provided by D197, D199, D201, E208, D317, D319, D321, and E328. In terms of domain architecture, Miro 2 spans 415–580 (RSVLMCKVLG…FTQLATMATF (166 aa)). Residues G427, G429, K430, S431, and A432 each contribute to the GTP site. Position 431 (S431) interacts with Mg(2+). E475 lines the Mg(2+) pocket. Positions 529, 531, and 560 each coordinate GTP. Residues 597–619 (GVLVAVGTAVAAVLSFSLYRVLV) form a helical; Anchor for type IV membrane protein membrane-spanning segment. Residues 620 to 622 (KSR) are Mitochondrial intermembrane-facing.

This sequence belongs to the mitochondrial Rho GTPase family. Homodimer. Interacts with the kinesin-binding proteins TRAK1/OIP106 and TRAK2/GRIF1, forming a link between mitochondria and the trafficking apparatus of the microtubules. Interacts with ARMCX3. Found in a complex with KIF5B, OGT, RHOT1 and TRAK1. Ubiquitinated by PRKN in a PINK1-dependent manner, leading to its degradation.

The protein resides in the mitochondrion outer membrane. It catalyses the reaction GTP + H2O = GDP + phosphate + H(+). It carries out the reaction ATP + H2O = ADP + phosphate + H(+). The enzyme catalyses UTP + H2O = UDP + phosphate + H(+). In terms of biological role, atypical mitochondrial nucleoside-triphosphatase (NTPase) involved in mitochondrial trafficking. Probably involved in control of anterograde transport of mitochondria and their subcellular distribution. Can hydrolyze GTP, ATP and UTP. The polypeptide is Mitochondrial Rho GTPase 2 (Rhot2) (Rattus norvegicus (Rat)).